The chain runs to 120 residues: V-type proton ATPase subunit F (120 aa).

It belongs to the V-ATPase F subunit family. As to quaternary structure, V-ATPase is a heteromultimeric enzyme composed of a peripheral catalytic V1 complex (components A to H) attached to an integral membrane V0 proton pore complex (components: a, c, c', c'' and d).

Subunit of the peripheral V1 complex of vacuolar ATPase essential for assembly or catalytic function. V-ATPase is responsible for acidifying a variety of intracellular compartments in eukaryotic cells. The polypeptide is V-type proton ATPase subunit F (vatF) (Dictyostelium discoideum (Social amoeba)).